Here is a 222-residue protein sequence, read N- to C-terminus: Glutathione S-transferase alpha M14 (222 aa).

Residue M1 is modified to N-acetylmethionine. At A2 the chain carries N-acetylalanine; in Glutathione S-transferase alpha M14, N-terminally processed. The 81-residue stretch at 3–83 (GKPILHYFNG…YIATKYNLYG (81 aa)) folds into the GST N-terminal domain. Position 4 is an N6-succinyllysine (K4). Glutathione contacts are provided by residues Y9, 54 to 55 (QV), and 67 to 68 (QT). One can recognise a GST C-terminal domain in the interval 85 to 208 (DAKERALIDM…QPGSQRKPPM (124 aa)). Positions 199-222 (QPGSQRKPPMDAKKIRRSQEYFPD) are disordered. Basic and acidic residues predominate over residues 206–222 (PPMDAKKIRRSQEYFPD).

It belongs to the GST superfamily. Alpha family. As to quaternary structure, homodimer or heterodimer of GSTA1 and GSTA2.

The protein resides in the cytoplasm. It catalyses the reaction RX + glutathione = an S-substituted glutathione + a halide anion + H(+). The enzyme catalyses prostaglandin A2 + glutathione = prostaglandin A2-S-(R)-glutathione. It carries out the reaction prostaglandin J2 + glutathione = prostaglandin J2-S-(R)-glutathione. The catalysed reaction is (13S)-hydroperoxy-(9Z,11E)-octadecadienoate + 2 glutathione = (13S)-hydroxy-(9Z,11E)-octadecadienoate + glutathione disulfide + H2O. It catalyses the reaction androst-5-ene-3,17-dione = androst-4-ene-3,17-dione. Glutathione S-transferase that catalyzes the nucleophilic attack of the sulfur atom of glutathione on the electrophilic groups of a wide range of exogenous and endogenous compounds. Involved in the formation of glutathione conjugates of both prostaglandin A2 (PGA2) and prostaglandin J2 (PGJ2). It also catalyzes the isomerization of D5-androstene-3,17-dione (AD) into D4-androstene-3,17-dione and may therefore play an important role in hormone biosynthesis. Through its glutathione-dependent peroxidase activity toward the fatty acid hydroperoxide (13S)-hydroperoxy-(9Z,11E)-octadecadienoate/13-HPODE it is also involved in the metabolism of oxidized linoleic acid. This chain is Glutathione S-transferase alpha M14, found in Sus scrofa (Pig).